The following is a 70-amino-acid chain: Turripeptide Ici9.2 (70 aa).

An N-terminal signal peptide occupies residues methionine 1–glycine 20. The 50-residue stretch at glutamine 21 to cysteine 70 folds into the Kazal-like domain. 3 disulfide bridges follow: cysteine 26–cysteine 56, cysteine 30–cysteine 49, and cysteine 38–cysteine 70.

This sequence belongs to the conopeptide P-like superfamily. In terms of tissue distribution, expressed by the venom duct.

Its subcellular location is the secreted. In terms of biological role, acts as a neurotoxin by inhibiting an ion channel. May also act as a serine protease inhibitor, since it possess the kazal serine protease inhibitor signature. In Iotyrris cingulifera (Sea snail), this protein is Turripeptide Ici9.2.